Here is a 768-residue protein sequence, read N- to C-terminus: Lon protease (768 aa).

One can recognise a Lon N-terminal domain in the interval 4–198; that stretch reads APFLPIRDLV…RILDEIVAEM (195 aa). Residue 349–356 participates in ATP binding; sequence GPPGIGKT. One can recognise a Lon proteolytic domain in the interval 586 to 768; sequence TGKIGVVNGL…DDVSKLVFVK (183 aa). Active-site residues include serine 674 and lysine 717.

It belongs to the peptidase S16 family. Homohexamer. Organized in a ring with a central cavity.

The protein resides in the cytoplasm. The catalysed reaction is Hydrolysis of proteins in presence of ATP.. In terms of biological role, ATP-dependent serine protease that mediates the selective degradation of mutant and abnormal proteins as well as certain short-lived regulatory proteins. Required for cellular homeostasis and for survival from DNA damage and developmental changes induced by stress. Degrades polypeptides processively to yield small peptide fragments that are 5 to 10 amino acids long. Binds to DNA in a double-stranded, site-specific manner. The chain is Lon protease from Fusobacterium nucleatum subsp. nucleatum (strain ATCC 25586 / DSM 15643 / BCRC 10681 / CIP 101130 / JCM 8532 / KCTC 2640 / LMG 13131 / VPI 4355).